The sequence spans 759 residues: Spindle pole body component alp16 (759 aa).

Interacts with gamma-tubulin.

It is found in the cytoplasm. Its subcellular location is the cytoskeleton. The protein localises to the microtubule organizing center. The protein resides in the spindle pole body. Functionally, component of the gamma tubule complex that is required for the regulation of both interphase microtubules and mitotic bipolar spindles. This Schizosaccharomyces pombe (strain 972 / ATCC 24843) (Fission yeast) protein is Spindle pole body component alp16 (alp16).